The following is a 1113-amino-acid chain: MGFNEFMSKLFGNKSQRDLKEVKPFVDKIKVAYGEIERLSDDDLRGRTAILRQKIQDYVKDERAEIDKLKVEVEGKDLDEREEIWAKVDKLEKEILDKMEVVLDEILPEAFAIIKDTARRFAQNETIRVKATDLDRDLAINHDFVSIEGDTAVYQNHWVAGGNEILWDMIHYDVQLIGGTVLHKGKIAEMATGEGKTLVATLPVFLNALTGNGVHVVTVNDYLSKRDSEWMGPLYMFHGLTVDCIDKHQPNSDARRKAYNADITFGTNNEFGFDYLRDNMATSPKDLVQRKHNYAIVDEVDSVLIDDARTPLIISGPTPKGEDQLFEEFLPNVEKVVEAQRKLCSQLLIDAKNKMASEDKKEQEEGSLLLYRSFKGLPKNKQLIKYLSEPGIKSSMLKTEEAYMAENMRNMHLVTDELYFIIDEKRNSVELTEKGIDLLTSRTDDPKFFVLPDIAAELSALDNMESDAEKRREAKDEIIANYSIKSERVHTVNQLLKAYALFEKDDQYVVMDNKVLIVDEQTGRIMDGRRYSDGLHQAIEAKEHVKVEAATQTFATITLQNYFRMYHKLAGMTGTAETEAGELWDIYKLDVVVIPTNKPIARKDMNDRIYKTAREKYAAVIEEIVRLVEEGRPVLVGTTSVEISELLSRMLRLRGIQHNVLNAKLHQKEAEIVAQAGQKGTVTIATNMAGRGTDIKLSAEVKKAGGLAIIGTERHESRRVDRQLRGRSGRQGDPGSSIFYVSLEDHLMRLFATEKIASLMDRLGFKEGEVLENNMLSKSVERAQKKVEENNFGIRKHLLEYDDVMNSQREVIYTRRRHALMGERIGMDVLNTIYDVCKALIDNYAEANDFEGFKEDLMRALAIESPITQEIFRGKKAEELTDMLFDEAYKSFQRKMDLIAEVAHPVVHQVFETQAAVYERILIPITDGKRVYNIGCNLREADETRGKSIIKEFEKAIVLHTIDESWKEHLREMDELRNSVQNASYENKDPLLIYKLESYELFRKMVEAMNRKTVAILMRARIPVPEAPSQEELEHRRQIEIRHAAEQRTDMSKYRTQKDDIEAQQKAQRDAASRPQGAAAPQTPIRNENKIGRNDPCPCGSGKKFKQCHGRNL.

Residues glutamine 175, 193 to 197 (GEGKT), and aspartate 694 contribute to the ATP site. The segment covering 1042-1072 (RHAAEQRTDMSKYRTQKDDIEAQQKAQRDAA) has biased composition (basic and acidic residues). The disordered stretch occupies residues 1042-1113 (RHAAEQRTDM…KFKQCHGRNL (72 aa)). Residues cysteine 1097, cysteine 1099, cysteine 1108, and histidine 1109 each contribute to the Zn(2+) site. Residues 1103 to 1113 (KKFKQCHGRNL) are compositionally biased toward basic residues.

The protein belongs to the SecA family. Monomer and homodimer. Part of the essential Sec protein translocation apparatus which comprises SecA, SecYEG and auxiliary proteins SecDF. Other proteins may also be involved. Zn(2+) serves as cofactor.

It localises to the cell inner membrane. It is found in the cytoplasm. It carries out the reaction ATP + H2O + cellular proteinSide 1 = ADP + phosphate + cellular proteinSide 2.. Part of the Sec protein translocase complex. Interacts with the SecYEG preprotein conducting channel. Has a central role in coupling the hydrolysis of ATP to the transfer of proteins into and across the cell membrane, serving as an ATP-driven molecular motor driving the stepwise translocation of polypeptide chains across the membrane. This chain is Protein translocase subunit SecA, found in Porphyromonas gingivalis (strain ATCC 33277 / DSM 20709 / CIP 103683 / JCM 12257 / NCTC 11834 / 2561).